Reading from the N-terminus, the 329-residue chain is Ribonucleoside-diphosphate reductase subunit beta (329 aa).

Fe cation-binding residues include Asp66, Glu97, and His101. Tyr105 is a catalytic residue. Fe cation contacts are provided by Glu164, Glu198, and His201.

Belongs to the ribonucleoside diphosphate reductase small chain family. As to quaternary structure, tetramer of two alpha and two beta subunits. The cofactor is Fe cation.

The enzyme catalyses a 2'-deoxyribonucleoside 5'-diphosphate + [thioredoxin]-disulfide + H2O = a ribonucleoside 5'-diphosphate + [thioredoxin]-dithiol. Functionally, provides the precursors necessary for DNA synthesis. Catalyzes the biosynthesis of deoxyribonucleotides from the corresponding ribonucleotides. This is Ribonucleoside-diphosphate reductase subunit beta (nrdF) from Bacillus subtilis (strain 168).